The following is a 387-amino-acid chain: S-adenosylmethionine synthase (387 aa).

His17 is a binding site for ATP. Residue Asp19 coordinates Mg(2+). Glu45 contributes to the K(+) binding site. Residues Glu58 and Gln101 each coordinate L-methionine. The flexible loop stretch occupies residues Gln101 to Ala111. ATP contacts are provided by residues Asp166 to Lys168, Arg231 to Phe232, Asp240, Arg246 to Lys247, Ala263, and Lys267. Asp240 serves as a coordination point for L-methionine. Residue Lys271 participates in L-methionine binding.

This sequence belongs to the AdoMet synthase family. Homotetramer; dimer of dimers. Requires Mg(2+) as cofactor. It depends on K(+) as a cofactor.

It localises to the cytoplasm. It catalyses the reaction L-methionine + ATP + H2O = S-adenosyl-L-methionine + phosphate + diphosphate. Its pathway is amino-acid biosynthesis; S-adenosyl-L-methionine biosynthesis; S-adenosyl-L-methionine from L-methionine: step 1/1. Its function is as follows. Catalyzes the formation of S-adenosylmethionine (AdoMet) from methionine and ATP. The overall synthetic reaction is composed of two sequential steps, AdoMet formation and the subsequent tripolyphosphate hydrolysis which occurs prior to release of AdoMet from the enzyme. This is S-adenosylmethionine synthase from Rhodospirillum centenum (strain ATCC 51521 / SW).